Here is a 248-residue protein sequence, read N- to C-terminus: Probable transcriptional regulatory protein BBta_6910 (248 aa).

Belongs to the TACO1 family.

Its subcellular location is the cytoplasm. In Bradyrhizobium sp. (strain BTAi1 / ATCC BAA-1182), this protein is Probable transcriptional regulatory protein BBta_6910.